The following is a 1469-amino-acid chain: Regulation of nuclear pre-mRNA domain-containing protein 2 (1469 aa).

Position 2 is an N-acetylalanine (alanine 2). Serine 16 is subject to Phosphoserine. The CID domain occupies 19–149; the sequence is SAGALESSLD…ALREALMDRA (131 aa). 2 disordered regions span residues 329-445 and 489-524; these read STLP…TAAP and TGVSSASRPSPGIPTSPSNLSSGLKTPAPATTPSHN. The segment covering 370–386 has biased composition (basic and acidic residues); it reads ESDKSATPEPVTDNRDV. Position 374 is a phosphoserine (serine 374). At threonine 376 the chain carries Phosphothreonine. Residues 387–396 are compositionally biased toward acidic residues; sequence EDMELSDVED. Serine 392 is modified (phosphoserine). Over residues 397–412 the composition is skewed to basic and acidic residues; sequence DGSKIIVEDRKEKPVE. The span at 419–430 shows a compositional bias: polar residues; sequence GVPTKSTESVSK. Residues 434–445 are compositionally biased toward pro residues; that stretch reads CAPPSVPTTAAP. 4 positions are modified to phosphoserine: serine 492, serine 495, serine 498, and serine 504. Threonine 536 is subject to Phosphothreonine. A disordered region spans residues 572–594; the sequence is ASEVTSQSTTASPASTTGSAVKG. Residues 576–591 are compositionally biased toward low complexity; sequence TSQSTTASPASTTGSA. 2 positions are modified to phosphoserine: serine 583 and serine 612. The residue at position 617 (threonine 617) is a Phosphothreonine. Phosphoserine is present on serine 633. Positions 647-656 are enriched in polar residues; sequence SLGFTGTHNP. 7 disordered regions span residues 647–686, 716–867, 919–1013, 1033–1140, 1154–1183, 1204–1328, and 1368–1414; these read SLGFTGTHNPSPAAPPTEVAVCQSSEVSKPKPESESTSPS, SSAP…AMMN, SENC…SGVE, KNAS…HGRE, SSFDNGPSSASELASLGGGGSGGLTGFKTT, FNST…PTPP, and GPGL…HRDA. 4 positions are modified to phosphoserine: serine 682, serine 684, serine 735, and serine 738. Position 742 is a phosphothreonine (threonine 742). Serine 749 carries the post-translational modification Phosphoserine. Threonine 751 carries the phosphothreonine modification. Polar residues predominate over residues 761 to 771; it reads PTSSSVDTMSL. Phosphoserine occurs at positions 777 and 781. Positions 777 to 787 are enriched in low complexity; it reads SPGSSTPSSTR. At threonine 782 the chain carries Phosphothreonine. Phosphoserine is present on residues serine 788, serine 836, serine 845, serine 919, and serine 947. Positions 959-982 are enriched in polar residues; that stretch reads PDSNHSGLSQSTAGHLTLPQTQYP. A phosphoserine mark is found at serine 984 and serine 995. Residues 1047–1073 are compositionally biased toward polar residues; sequence QTPNKGTSSDGVSLSNLTQPSLPTTDQ. Residues serine 1086 and serine 1117 each carry the phosphoserine modification. Over residues 1159-1168 the composition is skewed to low complexity; the sequence is GPSSASELAS. Gly residues predominate over residues 1169–1178; sequence LGGGGSGGLT. The segment covering 1272–1295 has biased composition (pro residues); that stretch reads GPPPPPGEHSGVPFPPPPPPPPPG. Asymmetric dimethylarginine is present on arginine 1375. Composition is skewed to low complexity over residues 1377–1390 and 1400–1409; these read SLSLPSHPLEHLGP and TSSSGLPLSP. Residues arginine 1432 and arginine 1438 each carry the asymmetric dimethylarginine modification.

As to quaternary structure, associates with the RNA polymerase II complex.

This is Regulation of nuclear pre-mRNA domain-containing protein 2 (Rprd2) from Mus musculus (Mouse).